The primary structure comprises 42 residues: Photosystem I reaction center subunit IX (42 aa).

Residues 7–27 (YLSTAPVLSALWFAILAGLLI) form a helical membrane-spanning segment.

It belongs to the PsaJ family.

The protein localises to the plastid. Its subcellular location is the chloroplast thylakoid membrane. Its function is as follows. May help in the organization of the PsaE and PsaF subunits. This Chlorokybus atmophyticus (Soil alga) protein is Photosystem I reaction center subunit IX.